A 368-amino-acid polypeptide reads, in one-letter code: uncharacterized protein (368 aa).

Functionally, might be involved in sporulation. This is an uncharacterized protein from Brachyspira hyodysenteriae (strain ATCC 49526 / WA1).